The chain runs to 518 residues: MATLIRSKLSNVATSVSNKSQAKVSGMFARMGFQAATDEEALGFAHCDDLDMEHRQGLQMDILKTEVPSGDPTAEGDSHYQRDGTGPPSSASKDEGLCSELSSYGKPKITAWEAGWNVTNAIQGMFVLGLPYAILHGGYLGLFLIIFAAVVCCYTGKILIACLYEENEDGETVRVRDSYVDIANACCAPRFPKLGGRVVNVAQIIELVMTCILYVVVSGNLMYNSFPSLPISQKSWSIIATAMLLPCAFLKNLKAVSKFSLLCTLAHFVINVLVIAYCLSRARDWAWDKVKFYIDVKKFPISIGIIVFSYTSQIFLPSLEGNMQSPKEFHCMMNWTHIAACILKGLFALVAYLTWADETKEVITDNLPSTIRAVVNLFLVAKALLSYPLPFFAAVEVLEKSLFQEGARAFFPNCYGGDGRLKSWGLTLRCALVVFTLLMAIYVPHFALLMGLTGSLTGAGLCFLLPSLFHLKLLWRKLQWHQVFFDVSIFVIGSICSVSGFVHSLEGLIEAFRFNIED.

Residues 1–125 (MATLIRSKLS…WNVTNAIQGM (125 aa)) lie on the Cytoplasmic side of the membrane. The interval 66 to 98 (EVPSGDPTAEGDSHYQRDGTGPPSSASKDEGLC) is disordered. A helical membrane pass occupies residues 126–146 (FVLGLPYAILHGGYLGLFLII). Residues 147-197 (FAAVVCCYTGKILIACLYEENEDGETVRVRDSYVDIANACCAPRFPKLGGR) lie on the Lumenal, vesicle side of the membrane. Residues 198–218 (VVNVAQIIELVMTCILYVVVS) form a helical membrane-spanning segment. Residues 219–258 (GNLMYNSFPSLPISQKSWSIIATAMLLPCAFLKNLKAVSK) lie on the Cytoplasmic side of the membrane. A helical transmembrane segment spans residues 259–279 (FSLLCTLAHFVINVLVIAYCL). At 280–298 (SRARDWAWDKVKFYIDVKK) the chain is on the lumenal, vesicle side. A helical membrane pass occupies residues 299–319 (FPISIGIIVFSYTSQIFLPSL). Topologically, residues 320–334 (EGNMQSPKEFHCMMN) are cytoplasmic. A helical membrane pass occupies residues 335 to 355 (WTHIAACILKGLFALVAYLTW). The Lumenal, vesicle portion of the chain corresponds to 356-376 (ADETKEVITDNLPSTIRAVVN). A helical membrane pass occupies residues 377-397 (LFLVAKALLSYPLPFFAAVEV). Over 398 to 431 (LEKSLFQEGARAFFPNCYGGDGRLKSWGLTLRCA) the chain is Cytoplasmic. A helical transmembrane segment spans residues 432–452 (LVVFTLLMAIYVPHFALLMGL). The Lumenal, vesicle segment spans residues 453–454 (TG). The chain crosses the membrane as a helical span at residues 455 to 475 (SLTGAGLCFLLPSLFHLKLLW). The Cytoplasmic segment spans residues 476-482 (RKLQWHQ). The chain crosses the membrane as a helical span at residues 483–503 (VFFDVSIFVIGSICSVSGFVH). The Lumenal, vesicle portion of the chain corresponds to 504-518 (SLEGLIEAFRFNIED).

It belongs to the amino acid/polyamine transporter 2 family.

Its subcellular location is the cytoplasmic vesicle membrane. The protein localises to the presynapse. The catalysed reaction is 4-aminobutanoate(out) + n H(+)(in) = 4-aminobutanoate(in) + n H(+)(out). It carries out the reaction glycine(out) + n H(+)(in) = glycine(in) + n H(+)(out). It catalyses the reaction beta-alanine(out) + n H(+)(in) = beta-alanine(in) + n H(+)(out). Functionally, antiporter that exchanges vesicular protons for cytosolic 4-aminobutanoate or to a lesser extend glycine, thus allowing their secretion from nerve terminals. The transport is equally dependent on the chemical and electrical components of the proton gradient. May also transport beta-alanine. Acidification of GABAergic synaptic vesicles is a prerequisite for 4-aminobutanoate uptake. This is Vesicular inhibitory amino acid transporter from Xenopus tropicalis (Western clawed frog).